Consider the following 206-residue polypeptide: N-(5'-phosphoribosyl)anthranilate isomerase (206 aa).

It belongs to the TrpF family.

The enzyme catalyses N-(5-phospho-beta-D-ribosyl)anthranilate = 1-(2-carboxyphenylamino)-1-deoxy-D-ribulose 5-phosphate. It functions in the pathway amino-acid biosynthesis; L-tryptophan biosynthesis; L-tryptophan from chorismate: step 3/5. In Pseudomonas putida (strain GB-1), this protein is N-(5'-phosphoribosyl)anthranilate isomerase.